The chain runs to 215 residues: Large ribosomal subunit protein uL4 (215 aa).

Residues 46–72 (TAKSKNRAEVSGGGRKPWAQKGGGRAR) form a disordered region. Over residues 56–71 (SGGGRKPWAQKGGGRA) the composition is skewed to gly residues.

It belongs to the universal ribosomal protein uL4 family. Part of the 50S ribosomal subunit.

Functionally, one of the primary rRNA binding proteins, this protein initially binds near the 5'-end of the 23S rRNA. It is important during the early stages of 50S assembly. It makes multiple contacts with different domains of the 23S rRNA in the assembled 50S subunit and ribosome. Forms part of the polypeptide exit tunnel. The protein is Large ribosomal subunit protein uL4 of Helicobacter pylori (strain G27).